The primary structure comprises 433 residues: Xylose isomerase (433 aa).

Asp305 and Asp307 together coordinate Mg(2+).

This sequence belongs to the xylose isomerase family. In terms of assembly, homotetramer. It depends on Mg(2+) as a cofactor.

The protein resides in the cytoplasm. The enzyme catalyses alpha-D-xylose = alpha-D-xylulofuranose. The sequence is that of Xylose isomerase from Cereibacter sphaeroides (strain KD131 / KCTC 12085) (Rhodobacter sphaeroides).